We begin with the raw amino-acid sequence, 685 residues long: Delta-like protein 4 (685 aa).

The N-terminal stretch at 1–26 is a signal peptide; the sequence is MAAASRSASGWALLLLVALWQQRAAG. At 27–529 the chain is on the extracellular side; it reads SGVFQLQLQE…PVGLPPSFPW (503 aa). 2 disulfide bridges follow: Cys50–Cys54 and Cys61–Cys74. N-linked (GlcNAc...) asparagine glycans are attached at residues Asn108 and Asn183. A DSL domain is found at 173–217; the sequence is VICSDNYYGDNCSRLCKKRNDHFGHYVCQPDGNLSCLPGWTGEYC. Cys175 and Cys184 form a disulfide bridge. Interaction with Notch1 regions lie at residues 185-187 and 191-195; these read SRL and RNDHF. A disulfide bond links Cys188 and Cys200. Asn205 is a glycosylation site (N-linked (GlcNAc...) asparagine). 25 disulfide bridges follow: Cys208/Cys217, Cys222/Cys233, Cys226/Cys239, Cys241/Cys250, Cys253/Cys264, Cys259/Cys270, Cys272/Cys281, Cys288/Cys300, Cys294/Cys310, Cys312/Cys321, Cys328/Cys339, Cys333/Cys348, Cys350/Cys359, Cys366/Cys377, Cys371/Cys388, Cys390/Cys399, Cys406/Cys417, Cys411/Cys426, Cys428/Cys437, Cys444/Cys455, Cys449/Cys464, Cys466/Cys475, Cys484/Cys495, Cys489/Cys506, and Cys508/Cys517. EGF-like domains lie at 218-251, 252-282, 284-322, 324-360, 362-400, 402-438, 440-476, and 480-518; these read QQPICLSGCHEQNGYCSKPAECLCRPGWQGRLCN, ECIPHNGCRHGTCSTPWQCTCDEGWGGLFCD, DLNYCTHHSPCKNGATCSNSGQRSYTCTCRPGYTGVDCE, ELSECDSNPCRNGGSCKDQEDGYHCLCPPGYYGLHCE, STLSCADSPCFNGGSCRERNQGANYACECPPNFTGSNCE, KVDRCTSNPCANGGQCLNRGPSRMCRCRPGFTGTYCE, HVSDCARNPCAHGGTCHDLENGLMCTCPAGFSGRRCE, and SIDACASSPCFNRATCYTDLSTDTFVCNCPYGFVGSRCE. N-linked (GlcNAc...) asparagine glycosylation is present at Asn393. The helical transmembrane segment at 530 to 550 threads the bilayer; the sequence is VAVSLGVGLAVLLVLLGMVAV. The Cytoplasmic portion of the chain corresponds to 551-685; that stretch reads AVRQLRLRRP…RNECVIATEV (135 aa).

Interacts with NOTCH4. Interacts (via N-terminal DSL and MNNL domains) with NOTCH1 (via EGF-like domains). In terms of tissue distribution, expressed in vascular endothelium.

It is found in the cell membrane. Functionally, involved in the Notch signaling pathway as Notch ligand. Activates NOTCH1 and NOTCH4. Involved in angiogenesis; negatively regulates endothelial cell proliferation and migration and angiogenic sprouting. Essential for retinal progenitor proliferation. Required for suppressing rod fates in late retinal progenitors as well as for proper generation of other retinal cell types. During spinal cord neurogenesis, inhibits V2a interneuron fate. This Homo sapiens (Human) protein is Delta-like protein 4 (DLL4).